A 280-amino-acid polypeptide reads, in one-letter code: Phosphonoacetaldehyde hydrolase (280 aa).

The active-site Nucleophile is the aspartate 23. Mg(2+)-binding residues include aspartate 23 and alanine 25. Lysine 64 serves as the catalytic Schiff-base intermediate with substrate. Residue aspartate 197 participates in Mg(2+) binding.

Belongs to the HAD-like hydrolase superfamily. PhnX family. As to quaternary structure, homodimer. Mg(2+) serves as cofactor.

The catalysed reaction is phosphonoacetaldehyde + H2O = acetaldehyde + phosphate + H(+). Its function is as follows. Involved in phosphonate degradation. The protein is Phosphonoacetaldehyde hydrolase of Bordetella avium (strain 197N).